We begin with the raw amino-acid sequence, 320 residues long: E3 ubiquitin-protein ligase RZF1 (320 aa).

S2 is subject to N-acetylserine. Residues 186–227 form an RING-type; atypical zinc finger; it reads CPVCKDEFELKSEAKQMPCHHIYHSDCIVPWLVQHNSCPVCR. The segment at 229–320 is disordered; that stretch reads ELPSRGSSSS…MGYSGWPFDY (92 aa). Low complexity-rich tracts occupy residues 232–249 and 295–308; these read SRGS…STNG and QQQQ…QQQQ.

In terms of tissue distribution, expressed in seedlings and in flowers.

It carries out the reaction S-ubiquitinyl-[E2 ubiquitin-conjugating enzyme]-L-cysteine + [acceptor protein]-L-lysine = [E2 ubiquitin-conjugating enzyme]-L-cysteine + N(6)-ubiquitinyl-[acceptor protein]-L-lysine.. In terms of biological role, E3 ubiquitin-protein ligase that promotes osmotic stress and abscisic acid (ABA) responses. Negatively regulates drought-mediated control of early seedling development, probably by influencing proline content, water loss, membrane ion leakage and the expression of dehydration stress-related genes (e.g. RAB18, RD29A, RD29B, AOX1A, ERD15, ERD1, COR15A, P5CS1 and P5CR). Modulates bZIP11 accumulation during rehydration following drought. The polypeptide is E3 ubiquitin-protein ligase RZF1 (Arabidopsis thaliana (Mouse-ear cress)).